Consider the following 200-residue polypeptide: Phospholipase A2 inhibitor LNF1 (200 aa).

The N-terminal stretch at 1–19 is a signal peptide; it reads MKYLHTICLLFIFVARGNS. 8 disulfide bridges follow: Cys22/Cys46, Cys25/Cys32, Cys39/Cys67, Cys73/Cys94, Cys95/Cys100, Cys118/Cys143, Cys136/Cys165, and Cys169/Cys191. Residue Asn176 is glycosylated (N-linked (GlcNAc...) asparagine).

This sequence belongs to the CNF-like-inhibitor family. As to quaternary structure, occurs as a mixture of oligomers. Tetrameric arrangement appears to be the predominant quaternary structure. Expressed by the liver.

It localises to the secreted. Inhibits the enzymatic activity of phospholipase A2 (PA2). The sequence is that of Phospholipase A2 inhibitor LNF1 from Lachesis muta muta (Bushmaster).